Consider the following 183-residue polypeptide: Capsid protein (183 aa).

The disordered stretch occupies residues 136–183; the sequence is NAPILSTLPETTVVRRRGRSPRRRTPSPRRRRSQSPRRRRSQSRESQC. The segment covering 149–176 has biased composition (basic residues); sequence VRRRGRSPRRRTPSPRRRRSQSPRRRRS. A phosphoserine; by host mark is found at S155, S162, and S170. Residues 155-161 form a 1; half-length repeat; that stretch reads SPRRRTP. The 3 X 8 AA repeats of S-P-R-R-R-[PR]-S-Q stretch occupies residues 155 to 177; the sequence is SPRRRTPSPRRRRSQSPRRRRSQ. Residues 158–175 carry the Bipartite nuclear localization signal motif; that stretch reads RRTPSPRRRRSQSPRRRR. Repeat copies occupy residues 162–169 and 170–177. An RNA binding region spans residues 177–183; the sequence is QSRESQC.

It belongs to the orthohepadnavirus core antigen family. Homodimerizes, then multimerizes. Interacts with cytosol exposed regions of viral L glycoprotein present in the reticulum-to-Golgi compartment. Interacts with human FLNB. Phosphorylated form interacts with host importin alpha; this interaction depends on the exposure of the NLS, which itself depends upon genome maturation and/or phosphorylation of the capsid protein. Interacts with host NUP153. Post-translationally, phosphorylated by host SRPK1, SRPK2, and maybe protein kinase C or GAPDH. Phosphorylation is critical for pregenomic RNA packaging. Protein kinase C phosphorylation is stimulated by HBx protein and may play a role in transport of the viral genome to the nucleus at the late step during the viral replication cycle.

It localises to the virion. The protein resides in the host cytoplasm. Self assembles to form an icosahedral capsid. Most capsids appear to be large particles with an icosahedral symmetry of T=4 and consist of 240 copies of capsid protein, though a fraction forms smaller T=3 particles consisting of 180 capsid proteins. Entering capsids are transported along microtubules to the nucleus. Phosphorylation of the capsid is thought to induce exposure of nuclear localization signal in the C-terminal portion of the capsid protein that allows binding to the nuclear pore complex via the importin (karyopherin-) alpha and beta. Capsids are imported in intact form through the nuclear pore into the nuclear basket, where it probably binds NUP153. Only capsids that contain the mature viral genome can release the viral DNA and capsid protein into the nucleoplasm. Immature capsids get stuck in the basket. Capsids encapsulate the pre-genomic RNA and the P protein. Pre-genomic RNA is reverse-transcribed into DNA while the capsid is still in the cytoplasm. The capsid can then either be directed to the nucleus, providing more genomes for transcription, or bud through the endoplasmic reticulum to provide new virions. The chain is Capsid protein from Hepatitis B virus genotype D subtype ayw (isolate Italy/CI/1992) (HBV-D).